The sequence spans 100 residues: RxLR effector protein Avrblb2 (100 aa).

Residues 1 to 22 (MRSFLYGVLAFAVLARSSAVAA) form the signal peptide. The short motif at 43–57 (RSLRIEAQEVIQSGR) is the RxLR-dEER element. A Calmodulin-binding motif motif is present at residues 78–82 (RPDIK).

The protein belongs to the RxLR effector family. Interacts with the host papain-like cysteine protease C14. Interacts with the host calmodulin.

It localises to the secreted. It is found in the host cell membrane. Its function is as follows. Secreted effector that acts as an elicitor of hypersensitive response (HR) specifically on plants carrying defense protein Rpi-blb2. Enhances P.infestans colonization of Nicotiana benthamiana leaves. Interacts with, and subsequently prevents secretion into the apoplast of the host papain-like cysteine protease C14, thus promoting virulence by interfering with the execution of host defenses. Associates with calmodulin at the host plasma membrane to interfere with plant defense-associated calcium signaling in hosts. The chain is RxLR effector protein Avrblb2 from Phytophthora infestans (strain T30-4) (Potato late blight agent).